The primary structure comprises 944 residues: Protein translocase subunit SecA (944 aa).

ATP-binding positions include Q77, 95 to 99 (GEGKT), and D484. Positions 920–944 (EQEKQTRKKKKKKPHEDESSKTKIG) are disordered. Basic and acidic residues predominate over residues 933-944 (PHEDESSKTKIG).

It belongs to the SecA family. As to quaternary structure, monomer and homodimer. Part of the essential Sec protein translocation apparatus which comprises SecA, SecYEG and auxiliary proteins SecDF. Other proteins may also be involved.

It localises to the cell membrane. Its subcellular location is the cytoplasm. It carries out the reaction ATP + H2O + cellular proteinSide 1 = ADP + phosphate + cellular proteinSide 2.. In terms of biological role, part of the Sec protein translocase complex. Interacts with the SecYEG preprotein conducting channel. Has a central role in coupling the hydrolysis of ATP to the transfer of proteins into and across the cell membrane, serving as an ATP-driven molecular motor driving the stepwise translocation of polypeptide chains across the membrane. This Mycoplasma mycoides subsp. mycoides SC (strain CCUG 32753 / NCTC 10114 / PG1) protein is Protein translocase subunit SecA.